The sequence spans 246 residues: 23S rRNA (guanosine-2'-O-)-methyltransferase RlmB (246 aa).

The S-adenosyl-L-methionine site is built by glycine 198, isoleucine 218, and leucine 227.

It belongs to the class IV-like SAM-binding methyltransferase superfamily. RNA methyltransferase TrmH family. RlmB subfamily.

The protein resides in the cytoplasm. The catalysed reaction is guanosine(2251) in 23S rRNA + S-adenosyl-L-methionine = 2'-O-methylguanosine(2251) in 23S rRNA + S-adenosyl-L-homocysteine + H(+). Functionally, specifically methylates the ribose of guanosine 2251 in 23S rRNA. This Shewanella oneidensis (strain ATCC 700550 / JCM 31522 / CIP 106686 / LMG 19005 / NCIMB 14063 / MR-1) protein is 23S rRNA (guanosine-2'-O-)-methyltransferase RlmB.